The sequence spans 134 residues: Small ribosomal subunit protein bS16 (134 aa).

The interval 79–134 is disordered; sequence AGIAKRPSRNNPTKGEPGKKAQERLALAKQAEEEAAAKAAEAAAAAAAPAEEAASE. Positions 115–134 are enriched in low complexity; it reads AKAAEAAAAAAAPAEEAASE.

This sequence belongs to the bacterial ribosomal protein bS16 family.

This is Small ribosomal subunit protein bS16 from Brucella suis (strain ATCC 23445 / NCTC 10510).